Here is a 434-residue protein sequence, read N- to C-terminus: Glutamate-1-semialdehyde 2,1-aminomutase 1 (434 aa).

Lys-270 carries the N6-(pyridoxal phosphate)lysine modification.

Belongs to the class-III pyridoxal-phosphate-dependent aminotransferase family. HemL subfamily. Homodimer. Pyridoxal 5'-phosphate is required as a cofactor.

It localises to the cytoplasm. It catalyses the reaction (S)-4-amino-5-oxopentanoate = 5-aminolevulinate. Its pathway is porphyrin-containing compound metabolism; protoporphyrin-IX biosynthesis; 5-aminolevulinate from L-glutamyl-tRNA(Glu): step 2/2. This is Glutamate-1-semialdehyde 2,1-aminomutase 1 from Bacillus anthracis (strain CDC 684 / NRRL 3495).